A 362-amino-acid polypeptide reads, in one-letter code: Chorismate synthase (362 aa).

R47 is an NADP(+) binding site. Residues 124 to 126 (RSS), G286, 301 to 305 (KPTAT), and R327 each bind FMN.

It belongs to the chorismate synthase family. As to quaternary structure, homotetramer. The cofactor is FMNH2.

The enzyme catalyses 5-O-(1-carboxyvinyl)-3-phosphoshikimate = chorismate + phosphate. It participates in metabolic intermediate biosynthesis; chorismate biosynthesis; chorismate from D-erythrose 4-phosphate and phosphoenolpyruvate: step 7/7. Functionally, catalyzes the anti-1,4-elimination of the C-3 phosphate and the C-6 proR hydrogen from 5-enolpyruvylshikimate-3-phosphate (EPSP) to yield chorismate, which is the branch point compound that serves as the starting substrate for the three terminal pathways of aromatic amino acid biosynthesis. This reaction introduces a second double bond into the aromatic ring system. This is Chorismate synthase from Gloeothece citriformis (strain PCC 7424) (Cyanothece sp. (strain PCC 7424)).